A 778-amino-acid chain; its full sequence is MSMTRRYSSTQYSNKMSLQSLSSLLLLVTLFFSPAFALKKSYIVYLGSHAHLPQISSAHLDGVAHSHRTFLASFVGSHENAKEAIFYSYKRHINGFAAILDENEAAEIAKHPDVVSVFPNKGRKLHTTHSWNFMLLAKNGVVHKSSLWNKAGYGEDTIIANLDTGVWPESKSFSDEGYGAVPARWKGRCHKDVPCNRKLIGARYFNKGYLAYTGLPSNASYETCRDHDGHGSHTLSTAAGNFVPGANVFGIGNGTASGGSPKARVAAYKVCWPPVDGAECFDADILAAIEAAIEDGVDVLSASVGGDAGDYMSDGIAIGSFHAVKNGVTVVCSAGNSGPKSGTVSNVAPWVITVGASSMDREFQAFVELKNGQSFKGTSLSKPLPEEKMYSLISAADANVANGNVTDALLCKKGSLDPKKVKGKILVCLRGDNARVDKGMQAAAAGAAGMVLCNDKASGNEIISDAHVLPASQIDYKDGETLFSYLSSTKDPKGYIKAPTATLNTKPAPFMASFSSRGPNTITPGILKPDITAPGVNIIAAFTEATGPTDLDSDNRRTPFNTESGTSMSCPHISGVVGLLKTLHPHWSPAAIRSAIMTTSRTRNNRRKPMVDESFKKANPFSYGSGHVQPNKAAHPGLVYDLTTGDYLDFLCAVGYNNTVVQLFAEDPQYTCRQGANLLDFNYPSITVPNLTGSITVTRKLKNVGPPATYNARFREPLGVRVSVEPKQLTFNKTGEVKIFQMTLRPLPVTPSGYVFGELTWTDSHHYVRSPIVVQLSS.

The signal sequence occupies residues M1 to A35. The 86-residue stretch at S41 to H126 folds into the Inhibitor I9 domain. In terms of domain architecture, Peptidase S8 spans S130–A634. The active-site Charge relay system is the D163. N-linked (GlcNAc...) asparagine glycosylation is present at N218. The Charge relay system role is filled by H230. N-linked (GlcNAc...) asparagine glycosylation is found at N253 and N404. The 86-residue stretch at A401–L486 folds into the PA domain. S567 serves as the catalytic Charge relay system. N-linked (GlcNAc...) asparagine glycans are attached at residues N657, N690, and N732.

The protein belongs to the peptidase S8 family. In terms of tissue distribution, expressed in the vasculature of roots and leaves, stomata, sepals, stigma, anthers and siliques.

The protein localises to the endoplasmic reticulum. The protein resides in the cell membrane. Functionally, serine protease. Has a substrate preference for the hydrophobic residues Phe and Ala and the basic residue Asp in the P1 position, and for Asp, Leu or Ala in the P1' position. Interferes with CLAVATA 3 (CLV3) signaling, but does not cleave CLV3. This is Subtilisin-like protease SBT5.4 from Arabidopsis thaliana (Mouse-ear cress).